A 203-amino-acid polypeptide reads, in one-letter code: Probable nicotinate-nucleotide adenylyltransferase (203 aa).

Belongs to the NadD family.

The enzyme catalyses nicotinate beta-D-ribonucleotide + ATP + H(+) = deamido-NAD(+) + diphosphate. The protein operates within cofactor biosynthesis; NAD(+) biosynthesis; deamido-NAD(+) from nicotinate D-ribonucleotide: step 1/1. Functionally, catalyzes the reversible adenylation of nicotinate mononucleotide (NaMN) to nicotinic acid adenine dinucleotide (NaAD). This Clostridium kluyveri (strain ATCC 8527 / DSM 555 / NBRC 12016 / NCIMB 10680 / K1) protein is Probable nicotinate-nucleotide adenylyltransferase.